The primary structure comprises 328 residues: Testis-specific serine/threonine-protein kinase 4 (328 aa).

The 269-residue stretch at 25–293 folds into the Protein kinase domain; sequence YEVGKAIGHG…ILDIIKDSWV (269 aa). ATP is bound by residues 31–39 and Lys-54; that span reads IGHGSYGSV. The active-site Proton acceptor is Asp-148. The residue at position 197 (Thr-197) is a Phosphothreonine.

It belongs to the protein kinase superfamily. CAMK Ser/Thr protein kinase family. Homodimer. Interacts with HSP90; this interaction stabilizes and activates TSSK4. Interacts with ODF2 (via C-terminus); this interaction promotes ODF2 phosphorylation on 'Ser-95'. May interact with CREM. Interacts with CREB1; this interaction facilitates phosphorylation on 'Ser-133'. Interacts with QRICH2. Mg(2+) is required as a cofactor. In terms of processing, activated by autophosphorylation on Thr-197. ODF2 potentiates the autophosphorylation activity of TSSK4 at Thr-197. Ubiquitinated; HSP90 activity negatively regulates ubiquitination and degradation. Expressed only in the testis.

It localises to the cytoplasmic vesicle. The protein localises to the secretory vesicle. Its subcellular location is the acrosome. It is found in the cell projection. The protein resides in the cilium. It localises to the flagellum. It catalyses the reaction L-seryl-[protein] + ATP = O-phospho-L-seryl-[protein] + ADP + H(+). The enzyme catalyses L-threonyl-[protein] + ATP = O-phospho-L-threonyl-[protein] + ADP + H(+). Activated by phosphorylation on Thr-197. Serine/threonine kinase which is involved in male germ cell development and in mature sperm function. May be involved in the Cre/Creb signaling pathway. Phosphorylates CREB1 on 'Ser-133' in vitro and can stimulate Cre/Creb pathway in cells. Phosphorylates CREM on 'Ser-116' in vitro. Phosphorylates ODF2 on 'Ser-95'. This is Testis-specific serine/threonine-protein kinase 4 from Homo sapiens (Human).